We begin with the raw amino-acid sequence, 257 residues long: Protein patched homolog 1 (257 aa).

The Extracellular portion of the chain corresponds to Ala-1 to Asp-199. N-linked (GlcNAc...) asparagine glycans are attached at residues Asn-75, Asn-114, and Asn-177. A helical transmembrane segment spans residues Ile-200–Met-220. The region spanning Ser-201–Ser-257 is the SSD domain. Topologically, residues Leu-221 to Ala-235 are cytoplasmic. Residues Gly-236–Ile-256 form a helical membrane-spanning segment.

The protein belongs to the patched family. Post-translationally, glycosylation is necessary for SHH binding. In the eye, detected in neural retina, iris, retinal pigment epithelium, but not in lens.

It localises to the membrane. In terms of biological role, acts as a receptor for sonic hedgehog (SHH), indian hedgehog (IHH) and desert hedgehog (DHH). Associates with the smoothened protein (SMO) to transduce the hedgehog's proteins signal. This is Protein patched homolog 1 (PTC1) from Cynops pyrrhogaster (Japanese fire-bellied newt).